The following is a 177-amino-acid chain: ATP synthase subunit delta (177 aa).

It belongs to the ATPase delta chain family. In terms of assembly, F-type ATPases have 2 components, F(1) - the catalytic core - and F(0) - the membrane proton channel. F(1) has five subunits: alpha(3), beta(3), gamma(1), delta(1), epsilon(1). F(0) has three main subunits: a(1), b(2) and c(10-14). The alpha and beta chains form an alternating ring which encloses part of the gamma chain. F(1) is attached to F(0) by a central stalk formed by the gamma and epsilon chains, while a peripheral stalk is formed by the delta and b chains.

Its subcellular location is the cell membrane. F(1)F(0) ATP synthase produces ATP from ADP in the presence of a proton or sodium gradient. F-type ATPases consist of two structural domains, F(1) containing the extramembraneous catalytic core and F(0) containing the membrane proton channel, linked together by a central stalk and a peripheral stalk. During catalysis, ATP synthesis in the catalytic domain of F(1) is coupled via a rotary mechanism of the central stalk subunits to proton translocation. Functionally, this protein is part of the stalk that links CF(0) to CF(1). It either transmits conformational changes from CF(0) to CF(1) or is implicated in proton conduction. The sequence is that of ATP synthase subunit delta from Buchnera aphidicola subsp. Acyrthosiphon pisum (strain APS) (Acyrthosiphon pisum symbiotic bacterium).